We begin with the raw amino-acid sequence, 347 residues long: Very-long-chain 3-oxoacyl-CoA reductase (347 aa).

A helical membrane pass occupies residues Leu-22–Met-42. Positions 68, 122, 149, 223, 227, 256, and 258 each coordinate NADP(+). The Proton donor role is filled by Tyr-223. Lys-227 acts as the Lowers pKa of active site Tyr in catalysis.

It belongs to the short-chain dehydrogenases/reductases (SDR) family.

It localises to the endoplasmic reticulum membrane. It carries out the reaction a very-long-chain (3R)-3-hydroxyacyl-CoA + NADP(+) = a very-long-chain 3-oxoacyl-CoA + NADPH + H(+). The protein operates within lipid metabolism; fatty acid biosynthesis. In terms of biological role, component of the microsomal membrane bound fatty acid elongation system, which produces the 26-carbon very long-chain fatty acids (VLCFA) from palmitate. Catalyzes the reduction of the 3-ketoacyl-CoA intermediate that is formed in each cycle of fatty acid elongation. VLCFAs serve as precursors for ceramide and sphingolipids. This Vanderwaltozyma polyspora (strain ATCC 22028 / DSM 70294 / BCRC 21397 / CBS 2163 / NBRC 10782 / NRRL Y-8283 / UCD 57-17) (Kluyveromyces polysporus) protein is Very-long-chain 3-oxoacyl-CoA reductase.